The primary structure comprises 520 residues: Pantetheine hydrolase VNN2 (520 aa).

Positions 1–22 (MVTSSFPISVAVFALITLQVGT) are cleaved as a signal peptide. Positions 31-306 (YEHAVILPNK…GKLLLSEVDS (276 aa)) constitute a CN hydrolase domain. N-linked (GlcNAc...) asparagine glycosylation occurs at Asn-39. Catalysis depends on Glu-80, which acts as the Proton acceptor. The active-site Proton donor is Lys-179. The active-site Nucleophile is the Cys-211. Residues Asn-273, Asn-347, Asn-357, Asn-411, and Asn-468 are each glycosylated (N-linked (GlcNAc...) asparagine). The GPI-anchor amidated cysteine moiety is linked to residue Cys-493. The propeptide at 494–520 (GTSNSAITYLLIFILLMIIALQNIVML) is removed in mature form.

It belongs to the carbon-nitrogen hydrolase superfamily. BTD/VNN family. Widely expressed with higher expression in spleen and blood.

The protein resides in the cell membrane. It carries out the reaction (R)-pantetheine + H2O = cysteamine + (R)-pantothenate. Amidohydrolase that hydrolyzes specifically one of the carboamide linkages in D-pantetheine thus recycling pantothenic acid (vitamin B5) and releasing cysteamine. Involved in the thymus homing of bone marrow cells. May regulate beta-2 integrin-mediated cell adhesion, migration and motility of neutrophil. The sequence is that of Pantetheine hydrolase VNN2 from Homo sapiens (Human).